The sequence spans 239 residues: Ribonuclease Le2 (239 aa).

5 cysteine pairs are disulfide-bonded: cysteine 5/cysteine 22, cysteine 13/cysteine 58, cysteine 21/cysteine 126, cysteine 66/cysteine 118, and cysteine 191/cysteine 225. Catalysis depends on residues histidine 51, glutamate 111, and histidine 115.

It belongs to the RNase T2 family.

It carries out the reaction a ribonucleotidyl-ribonucleotide-RNA + H2O = a 3'-end 3'-phospho-ribonucleotide-RNA + a 5'-end dephospho-ribonucleoside-RNA + H(+). This is a base non-specific and adenylic acid preferential ribonuclease. In Lentinula edodes (Shiitake mushroom), this protein is Ribonuclease Le2.